The following is a 462-amino-acid chain: DNA polymerase delta subunit 3 (462 aa).

A2 is modified (N-acetylalanine). Disordered regions lie at residues 144 to 186, 200 to 230, 254 to 384, and 403 to 462; these read APAE…ASQQ, TKTQ…PGKG, AVKE…RVLK, and SESC…FQKK. The segment covering 156 to 174 has biased composition (polar residues); that stretch reads QSNLQAASEAQASELTTNG. Over residues 204-215 the composition is skewed to basic and acidic residues; sequence DTNKETKPEARE. Over residues 218-230 the composition is skewed to low complexity; the sequence is SASSAGGKAPGKG. A Glycyl lysine isopeptide (Lys-Gly) (interchain with G-Cter in SUMO); alternate cross-link involves residue K256. Residue K256 forms a Glycyl lysine isopeptide (Lys-Gly) (interchain with G-Cter in SUMO2); alternate linkage. K259 is covalently cross-linked (Glycyl lysine isopeptide (Lys-Gly) (interchain with G-Cter in SUMO2)). The segment covering 284–305 has biased composition (basic and acidic residues); the sequence is RKSEPGKVQQKEKSSRGKRVDL. Phosphoserine is present on S306. Residues 330–344 show a composition bias toward acidic residues; that stretch reads SSEDEVFEDSPEMYE. A compositionally biased stretch (pro residues) spans 348-368; that stretch reads PSPPPVSPPPDPMPKTEPPPV. Phosphoserine occurs at positions 403 and 405. T407 carries the post-translational modification Phosphothreonine. S409 carries the post-translational modification Phosphoserine. A compositionally biased stretch (low complexity) spans 416 to 427; it reads KPASAHKPPAAA. Positions 428–437 are enriched in basic and acidic residues; sequence VKREPREERK. K429 is covalently cross-linked (Glycyl lysine isopeptide (Lys-Gly) (interchain with G-Cter in SUMO); alternate). Residue K429 forms a Glycyl lysine isopeptide (Lys-Gly) (interchain with G-Cter in SUMO2); alternate linkage. Residues 451-462 are compositionally biased toward polar residues; sequence RQVSITGFFQKK. Residues 452–459 carry the PIP-box motif; it reads QVSITGFF. S454 bears the Phosphoserine mark.

Component of both the DNA polymerase delta and DNA polymerase zeta complexes. The tetrameric DNA polymerase delta complex (Pol-delta4), which consists of POLD1/p125, POLD2/p50, POLD3/p66/p68 and POLD4/p12, with POLD1 bearing DNA polymerase and 3' to 5' proofreading exonuclease activities. Within this complex, directly interacts with POLD2. Following stress caused by DNA damaging agents or by replication stress, POLD4 is degraded and Pol-delta4 is converted into a trimeric form of the complex (Pol-delta3), which consists of POLD1, POLD2 and POLD3. Pol-delta3 is the major form occurring at S phase replication sites, as well as DNA damage sites. Directly interacts with PCNA, as do POLD1 and POLD4; this interaction stimulates Pol-delta polymerase activity. POLD3 phosphorylation at Ser-454 impairs PCNA binding. Component of the DNA polymerase zeta complex (POLZ), which consists of REV3L, MAD2L2, POLD2 and POLD3, with REV3L bearing DNA polymerase catalytic activity. The DNA polymerase delta complex interacts with POLDIP2; this interaction is probably mediated through direct binding to POLD2. Post-translationally, ubiquitinated, but not targeted to the proteasome. Sumoylated. Sumoylation by SUMO3 may be predominant. Phosphorylation at Ser-454 is thought to decrease the affinity for PCNA and Pol-delta4 processivity. May be phosphorylated by CDK1-cyclin-A complex, as well as CDK2-cyclin-A and CDK2-cyclin-E complexes. PCNA interferes with CDK-cyclin phosphorylation.

It is found in the cytoplasm. The protein localises to the nucleus. In terms of biological role, accessory component of both the DNA polymerase delta complex and the DNA polymerase zeta complex. As a component of the trimeric and tetrameric DNA polymerase delta complexes (Pol-delta3 and Pol-delta4, respectively), plays a role in high fidelity genome replication, including in lagging strand synthesis, and repair. Required for optimal Pol-delta activity. Stabilizes the Pol-delta complex and plays a major role in Pol-delta stimulation by PCNA. Pol-delta3 and Pol-delta4 are characterized by the absence or the presence of POLD4. They exhibit differences in catalytic activity. Most notably, Pol-delta3 shows higher proofreading activity than Pol-delta4. Although both Pol-delta3 and Pol-delta4 process Okazaki fragments in vitro, Pol-delta3 may also be better suited to fulfill this task, exhibiting near-absence of strand displacement activity compared to Pol-delta4 and stalling on encounter with the 5'-blocking oligonucleotides. Pol-delta3 idling process may avoid the formation of a gap, while maintaining a nick that can be readily ligated. Along with DNA polymerase kappa, DNA polymerase delta carries out approximately half of nucleotide excision repair (NER) synthesis following UV irradiation. In this context, POLD3, along with PCNA and RFC1-replication factor C complex, is required to recruit POLD1, the catalytic subunit of the polymerase delta complex, to DNA damage sites. Under conditions of DNA replication stress, required for the repair of broken replication forks through break-induced replication (BIR). Involved in the translesion synthesis (TLS) of templates carrying O6-methylguanine or abasic sites performed by Pol-delta4, independently of DNA polymerase zeta (REV3L) or eta (POLH). Facilitates abasic site bypass by DNA polymerase delta by promoting extension from the nucleotide inserted opposite the lesion. Also involved in TLS, as a component of the tetrameric DNA polymerase zeta complex. Along with POLD2, dramatically increases the efficiency and processivity of DNA synthesis of the DNA polymerase zeta complex compared to the minimal zeta complex, consisting of only REV3L and REV7. This is DNA polymerase delta subunit 3 (Pold3) from Mus musculus (Mouse).